The primary structure comprises 363 residues: MAP kinase kinase skh1/pek1 (363 aa).

Residues 79-343 (ILYMNSLGEG…PQKMLTHPWV (265 aa)) form the Protein kinase domain. ATP is bound by residues 85 to 93 (LGEGVSGSV) and K108. The active-site Proton acceptor is the D206. Residue S234 is modified to Phosphoserine. T238 carries the post-translational modification Phosphothreonine.

This sequence belongs to the protein kinase superfamily. STE Ser/Thr protein kinase family. MAP kinase kinase subfamily.

The catalysed reaction is L-seryl-[protein] + ATP = O-phospho-L-seryl-[protein] + ADP + H(+). The enzyme catalyses L-threonyl-[protein] + ATP = O-phospho-L-threonyl-[protein] + ADP + H(+). It carries out the reaction L-tyrosyl-[protein] + ATP = O-phospho-L-tyrosyl-[protein] + ADP + H(+). With respect to regulation, activated by mkh1. Functionally, involved in the mkh1 signal transduction pathway that plays a role in cell wall integrity. Activates spm1/pmk1 via phosphorylation. This Schizosaccharomyces pombe (strain 972 / ATCC 24843) (Fission yeast) protein is MAP kinase kinase skh1/pek1 (skh1).